Consider the following 88-residue polypeptide: Small ribosomal subunit protein bS20 (88 aa).

The segment at 69–88 is disordered; sequence KNTASRKKSRLTKRFNKLTG. The span at 71–88 shows a compositional bias: basic residues; it reads TASRKKSRLTKRFNKLTG.

It belongs to the bacterial ribosomal protein bS20 family.

Functionally, binds directly to 16S ribosomal RNA. This Pelotomaculum thermopropionicum (strain DSM 13744 / JCM 10971 / SI) protein is Small ribosomal subunit protein bS20.